Here is a 409-residue protein sequence, read N- to C-terminus: MHAWPASEVPALPGQGRDLRIHDTATGGPVTLDPGPVARIYVCGITPYDATHMGHAATYNAFDLVQRVWLDTKRQVHYVQNVTDVDDPLLERAVRDGVDWTALAEQETALFREDMTALRMLPPQHYIGAVEAIPGIVPLVERLRDAGAAYELEGDVYFSVEADPHFGGVSHLDAATMRLLSAERGGDPDRPGKKNPLDPMLWMAAREGEPSWDGGTLGRGRPGWHIECVAIALDHLGMGFDVQGGGSDLAFPHHEMGASHAQALTGEFPMAKAYVHAGMVGLDGEKMSKSKGNLVFVSQLRREGVDPAAIRLTLLAHHYRSDWEWTDQVLQDALARLDRWRAAVSRPDGPPAEALVEEIREALANDLDSPAALAAVDRWAALQQESGGTDIGAPGVVSRAVDALLGVAL.

The segment at 1–27 (MHAWPASEVPALPGQGRDLRIHDTATG) is disordered. Cys-43 lines the Zn(2+) pocket. L-cysteinyl-5'-AMP-binding positions include 43-46 (CGIT), Thr-58, and 81-83 (NVT). The 'HIGH' region signature appears at 45–55 (ITPYDATHMGH). Positions 183-188 (ERGGDP) match the 'ERGGDP' region motif. L-cysteinyl-5'-AMP is bound at residue Trp-224. A Zn(2+)-binding site is contributed by Cys-228. Residue 246 to 248 (GSD) participates in L-cysteinyl-5'-AMP binding. His-253 lines the Zn(2+) pocket. Val-280 is a binding site for L-cysteinyl-5'-AMP. Residues 286–290 (KMSKS) carry the 'KMSKS' region motif.

Belongs to the class-I aminoacyl-tRNA synthetase family. MshC subfamily. As to quaternary structure, monomer. Requires Zn(2+) as cofactor.

The catalysed reaction is 1D-myo-inositol 2-amino-2-deoxy-alpha-D-glucopyranoside + L-cysteine + ATP = 1D-myo-inositol 2-(L-cysteinylamino)-2-deoxy-alpha-D-glucopyranoside + AMP + diphosphate + H(+). In terms of biological role, catalyzes the ATP-dependent condensation of GlcN-Ins and L-cysteine to form L-Cys-GlcN-Ins. The polypeptide is L-cysteine:1D-myo-inositol 2-amino-2-deoxy-alpha-D-glucopyranoside ligase (mshC) (Streptomyces coelicolor (strain ATCC BAA-471 / A3(2) / M145)).